The sequence spans 403 residues: NADH-quinone oxidoreductase subunit D (403 aa).

It belongs to the complex I 49 kDa subunit family. In terms of assembly, NDH-1 is composed of 14 different subunits. Subunits NuoB, C, D, E, F, and G constitute the peripheral sector of the complex.

Its subcellular location is the cell inner membrane. The enzyme catalyses a quinone + NADH + 5 H(+)(in) = a quinol + NAD(+) + 4 H(+)(out). Its function is as follows. NDH-1 shuttles electrons from NADH, via FMN and iron-sulfur (Fe-S) centers, to quinones in the respiratory chain. The immediate electron acceptor for the enzyme in this species is believed to be ubiquinone. Couples the redox reaction to proton translocation (for every two electrons transferred, four hydrogen ions are translocated across the cytoplasmic membrane), and thus conserves the redox energy in a proton gradient. The polypeptide is NADH-quinone oxidoreductase subunit D (Ruegeria sp. (strain TM1040) (Silicibacter sp.)).